A 590-amino-acid chain; its full sequence is V-type ATP synthase alpha chain (590 aa).

232–239 (GPFGSGKT) is a binding site for ATP.

This sequence belongs to the ATPase alpha/beta chains family.

The catalysed reaction is ATP + H2O + 4 H(+)(in) = ADP + phosphate + 5 H(+)(out). Its function is as follows. Produces ATP from ADP in the presence of a proton gradient across the membrane. The V-type alpha chain is a catalytic subunit. The polypeptide is V-type ATP synthase alpha chain (Thermoanaerobacter sp. (strain X514)).